The following is a 987-amino-acid chain: UPF0182 protein DIP0733 (987 aa).

A run of 7 helical transmembrane segments spans residues 19–39 (LTWLIPLLMILGALVPTVVDL), 63–83 (IGLFVGFGLLAGIVTFLAGWF), 115–135 (FLVVLPVVIGIAAGFLGQQAW), 176–196 (SVLLVVAFLIALVGHYLLGGI), 212–234 (YAKVQLAVTGGLYLLVRMASYWL), 261–281 (AKIVLLVISAVVAISFFSVIV), and 290–310 (ISTVLMIVSSLAIGNAWPIMM). Residues 904–927 (DLGEAKGLKPESQNRDKPEDKEGK) show a composition bias toward basic and acidic residues. Positions 904 to 950 (DLGEAKGLKPESQNRDKPEDKEGKAPSTPSAPASGSGTTGEAIGKIN) are disordered. The span at 928-943 (APSTPSAPASGSGTTG) shows a compositional bias: low complexity.

Belongs to the UPF0182 family.

It localises to the cell membrane. The chain is UPF0182 protein DIP0733 from Corynebacterium diphtheriae (strain ATCC 700971 / NCTC 13129 / Biotype gravis).